The sequence spans 272 residues: Undecaprenyl-diphosphatase (272 aa).

The next 8 membrane-spanning stretches (helical) occupy residues 6 to 26 (SLLVAAILGIVEGLTEFLPVS), 45 to 65 (AKTFEVVIQLGSILAVVVMFW), 89 to 109 (LSLIHILLGMVPAVVLGLVFH), 115 to 135 (LFNPINVMYALVVGGVLLIIA), 156 to 176 (AFFIGCFQCLALWPGFSRSGA), 189 to 209 (YAASEFSFLLAVPMMMGATAL), 221 to 241 (ADLPMFAVGFVTAFVVALVAI), and 251 to 271 (ISFIPFAIYRFIVAAAVFAVF).

Belongs to the UppP family.

It localises to the cell inner membrane. It catalyses the reaction di-trans,octa-cis-undecaprenyl diphosphate + H2O = di-trans,octa-cis-undecaprenyl phosphate + phosphate + H(+). In terms of biological role, catalyzes the dephosphorylation of undecaprenyl diphosphate (UPP). Confers resistance to bacitracin. This is Undecaprenyl-diphosphatase from Cronobacter sakazakii (strain ATCC BAA-894) (Enterobacter sakazakii).